Reading from the N-terminus, the 349-residue chain is Probable G-protein coupled receptor 21 (349 aa).

At 1–32 the chain is on the extracellular side; it reads MNSTLDGNQSSHPFCLLAFGYLETVNFCLLEV. N-linked (GlcNAc...) asparagine glycans are attached at residues asparagine 2 and asparagine 8. The helical transmembrane segment at 33 to 53 threads the bilayer; the sequence is LIIVFLTVLIISGNIIVIFVF. Residues 54-75 are Cytoplasmic-facing; sequence HCAPLLNHHTTSYFIQTMAYAD. A helical transmembrane segment spans residues 76 to 96; that stretch reads LFVGVSCVVPSLSLLHHPLPV. The Extracellular portion of the chain corresponds to 97 to 104; it reads EESLTCQI. The chain crosses the membrane as a helical span at residues 105–125; the sequence is FGFVVSVLKSVSMASLACISI. At 126–147 the chain is on the cytoplasmic side; the sequence is DRYIAITKPLTYNTLVTPWRLR. A helical transmembrane segment spans residues 148-168; it reads LCIFLIWLYSTLVFLPSFFHW. Residues 169-191 lie on the Extracellular side of the membrane; that stretch reads GKPGYHGDVFQWCAESWHTDSYF. A helical transmembrane segment spans residues 192 to 212; that stretch reads TLFIVMMLYAPAALIVCFTYF. Topologically, residues 213–252 are cytoplasmic; that stretch reads NIFRICQQHTKDISERQARFSSQSGETGEVQACPDKRYAM. The chain crosses the membrane as a helical span at residues 253–273; sequence VLFRITSVFYILWLPYIIYFL. Residues 274-283 are Extracellular-facing; sequence LESSTGHSNR. The helical transmembrane segment at 284–304 threads the bilayer; the sequence is FASFLTTWLAISNSFCNCVIY. At 305–349 the chain is on the cytoplasmic side; the sequence is SLSNSVFQRGLKRLSGAMCTSCASQTTANDPYTVRSKGPLNGCHI.

It belongs to the G-protein coupled receptor 1 family. Not detected in the brain regions thalamus, putamen, caudate, frontal cortex, pons, hypothalamus, hippocampus.

Its subcellular location is the cell membrane. Orphan receptor. In Homo sapiens (Human), this protein is Probable G-protein coupled receptor 21 (GPR21).